The following is a 373-amino-acid chain: Lipoyl synthase (373 aa).

The disordered stretch occupies residues 12–36 (HVVSNDHPSSSPLQPGVKQSGEDKI). Residues Cys81, Cys86, Cys92, Cys107, Cys111, Cys114, and Ser323 each coordinate [4Fe-4S] cluster. In terms of domain architecture, Radical SAM core spans 93–312 (FSHGTATFMI…EEYGMALGFS (220 aa)). The disordered stretch occupies residues 346 to 373 (PAVSSTEHRERHTIASKSASKTESIPHR). Residues 360–373 (ASKSASKTESIPHR) are compositionally biased toward polar residues.

This sequence belongs to the radical SAM superfamily. Lipoyl synthase family. Requires [4Fe-4S] cluster as cofactor.

The protein localises to the cytoplasm. The catalysed reaction is [[Fe-S] cluster scaffold protein carrying a second [4Fe-4S](2+) cluster] + N(6)-octanoyl-L-lysyl-[protein] + 2 oxidized [2Fe-2S]-[ferredoxin] + 2 S-adenosyl-L-methionine + 4 H(+) = [[Fe-S] cluster scaffold protein] + N(6)-[(R)-dihydrolipoyl]-L-lysyl-[protein] + 4 Fe(3+) + 2 hydrogen sulfide + 2 5'-deoxyadenosine + 2 L-methionine + 2 reduced [2Fe-2S]-[ferredoxin]. The protein operates within protein modification; protein lipoylation via endogenous pathway; protein N(6)-(lipoyl)lysine from octanoyl-[acyl-carrier-protein]: step 2/2. Its function is as follows. Catalyzes the radical-mediated insertion of two sulfur atoms into the C-6 and C-8 positions of the octanoyl moiety bound to the lipoyl domains of lipoate-dependent enzymes, thereby converting the octanoylated domains into lipoylated derivatives. In Xylella fastidiosa (strain M12), this protein is Lipoyl synthase.